The primary structure comprises 279 residues: Probable ribosomal RNA small subunit methyltransferase A (279 aa).

The S-adenosyl-L-methionine site is built by N23, L25, G50, E71, D95, and N110.

This sequence belongs to the class I-like SAM-binding methyltransferase superfamily. rRNA adenine N(6)-methyltransferase family. RsmA subfamily.

Its subcellular location is the cytoplasm. Specifically dimethylates two adjacent adenosines in the loop of a conserved hairpin near the 3'-end of 16S rRNA in the 30S particle. May play a critical role in biogenesis of 30S subunits. This is Probable ribosomal RNA small subunit methyltransferase A from Thermococcus kodakarensis (strain ATCC BAA-918 / JCM 12380 / KOD1) (Pyrococcus kodakaraensis (strain KOD1)).